Here is an 804-residue protein sequence, read N- to C-terminus: Leucine--tRNA ligase (804 aa).

Positions 39 to 50 (PFPSGKGLHVGH) match the 'HIGH' region motif. The 'KMSKS' region signature appears at 573–577 (KMSKS). Residue lysine 576 participates in ATP binding.

This sequence belongs to the class-I aminoacyl-tRNA synthetase family.

It is found in the cytoplasm. The catalysed reaction is tRNA(Leu) + L-leucine + ATP = L-leucyl-tRNA(Leu) + AMP + diphosphate. This chain is Leucine--tRNA ligase, found in Lactobacillus acidophilus (strain ATCC 700396 / NCK56 / N2 / NCFM).